Reading from the N-terminus, the 169-residue chain is Crossover junction endodeoxyribonuclease RuvC (169 aa).

Active-site residues include Asp11, Glu71, and Asp143. Asp11, Glu71, and Asp143 together coordinate Mg(2+).

This sequence belongs to the RuvC family. Homodimer which binds Holliday junction (HJ) DNA. The HJ becomes 2-fold symmetrical on binding to RuvC with unstacked arms; it has a different conformation from HJ DNA in complex with RuvA. In the full resolvosome a probable DNA-RuvA(4)-RuvB(12)-RuvC(2) complex forms which resolves the HJ. Mg(2+) serves as cofactor.

The protein resides in the cytoplasm. The catalysed reaction is Endonucleolytic cleavage at a junction such as a reciprocal single-stranded crossover between two homologous DNA duplexes (Holliday junction).. Functionally, the RuvA-RuvB-RuvC complex processes Holliday junction (HJ) DNA during genetic recombination and DNA repair. Endonuclease that resolves HJ intermediates. Cleaves cruciform DNA by making single-stranded nicks across the HJ at symmetrical positions within the homologous arms, yielding a 5'-phosphate and a 3'-hydroxyl group; requires a central core of homology in the junction. The consensus cleavage sequence is 5'-(A/T)TT(C/G)-3'. Cleavage occurs on the 3'-side of the TT dinucleotide at the point of strand exchange. HJ branch migration catalyzed by RuvA-RuvB allows RuvC to scan DNA until it finds its consensus sequence, where it cleaves and resolves the cruciform DNA. This is Crossover junction endodeoxyribonuclease RuvC from Rhizobium johnstonii (strain DSM 114642 / LMG 32736 / 3841) (Rhizobium leguminosarum bv. viciae).